The following is a 635-amino-acid chain: Extracellular metalloproteinase 1 (635 aa).

An N-terminal signal peptide occupies residues 1-19 (MHGLLLAAGLLSLPLHVLA). A propeptide spanning residues 20 to 246 (HPQPSTSTSL…VHNVVDYVAH (227 aa)) is cleaved from the precursor. N-linked (GlcNAc...) asparagine glycosylation is present at Asn-287. His-430 is a Zn(2+) binding site. The active site involves Glu-431. His-434 provides a ligand contact to Zn(2+). Asn-475, Asn-594, and Asn-623 each carry an N-linked (GlcNAc...) asparagine glycan.

Belongs to the peptidase M36 family. It depends on Zn(2+) as a cofactor.

The protein resides in the secreted. Its function is as follows. Secreted metalloproteinase probably acting as a virulence factor. The chain is Extracellular metalloproteinase 1 (MEP1) from Trichophyton rubrum (Athlete's foot fungus).